We begin with the raw amino-acid sequence, 138 residues long: Putative pre-16S rRNA nuclease (138 aa).

Belongs to the YqgF nuclease family.

It localises to the cytoplasm. Functionally, could be a nuclease involved in processing of the 5'-end of pre-16S rRNA. The chain is Putative pre-16S rRNA nuclease from Helicobacter hepaticus (strain ATCC 51449 / 3B1).